A 618-amino-acid polypeptide reads, in one-letter code: Medium-chain acyl-CoA ligase ACSF2, mitochondrial (618 aa).

The transit peptide at 1–44 (MRATAAYVGMLRLGRMCAGSPGVLGARAALSRSWQEARLQAVRF) directs the protein to the mitochondrion. An N6-acetyllysine modification is found at lysine 182. Lysine 185 is modified (N6-acetyllysine; alternate). At lysine 185 the chain carries N6-succinyllysine; alternate. 266–274 (TSGTTGSPK) serves as a coordination point for ATP. N6-acetyllysine occurs at positions 343 and 401. An N6-succinyllysine modification is found at lysine 481. ATP is bound by residues aspartate 496 and arginine 511. Lysine 513 is modified (N6-acetyllysine). Lysine 547 and lysine 573 each carry N6-acetyllysine; alternate. Lysine 547 and lysine 573 each carry N6-succinyllysine; alternate. Lysine 602 lines the ATP pocket. Lysine 602 is modified (N6-succinyllysine).

It belongs to the ATP-dependent AMP-binding enzyme family.

It localises to the mitochondrion. The catalysed reaction is a medium-chain fatty acid + ATP + CoA = a medium-chain fatty acyl-CoA + AMP + diphosphate. It carries out the reaction octanoate + ATP + CoA = octanoyl-CoA + AMP + diphosphate. In terms of biological role, acyl-CoA synthases catalyze the initial reaction in fatty acid metabolism, by forming a thioester with CoA. Has some preference toward medium-chain substrates. Plays a role in adipocyte differentiation. The polypeptide is Medium-chain acyl-CoA ligase ACSF2, mitochondrial (Macaca fascicularis (Crab-eating macaque)).